The following is a 106-amino-acid chain: Iron-sulfur cluster assembly protein CyaY (106 aa).

Belongs to the frataxin family.

Involved in iron-sulfur (Fe-S) cluster assembly. May act as a regulator of Fe-S biogenesis. The chain is Iron-sulfur cluster assembly protein CyaY from Yersinia pseudotuberculosis serotype O:3 (strain YPIII).